The chain runs to 729 residues: Subtilisin-like protease SBT4.3 (729 aa).

Residues 1–23 (MAKLSTPLYLICLAFIFTRDVSA) form the signal peptide. A propeptide spans 24–109 (NDYRQASSVY…VFPSKSHELT (86 aa)) (activation peptide). The Inhibitor I9 domain occupies 32–108 (VYIVYMGTLP…SVFPSKSHEL (77 aa)). N-linked (GlcNAc...) asparagine glycosylation is present at Asn82. One can recognise a Peptidase S8 domain in the interval 113-580 (SWDFVGFGEK…SGQINPTKAS (468 aa)). Residues Asp139 and His196 each act as charge relay system in the active site. Residues Asn275, Asn348, Asn359, and Asn363 are each glycosylated (N-linked (GlcNAc...) asparagine). Positions 350–436 (TKFPIVYGQN…LGFEDYKSIK (87 aa)) constitute a PA domain. Ser521 acts as the Charge relay system in catalysis. N-linked (GlcNAc...) asparagine glycans are attached at residues Asn614, Asn642, and Asn656.

It belongs to the peptidase S8 family. In terms of processing, the C-terminal propeptide is autocleaved.

It is found in the secreted. The sequence is that of Subtilisin-like protease SBT4.3 from Arabidopsis thaliana (Mouse-ear cress).